We begin with the raw amino-acid sequence, 718 residues long: U-box domain-containing protein 5 (718 aa).

A U-box domain is found at 218–292 (TLPEKFKCTL…SEWCAKNGLD (75 aa)). 3 ARM repeats span residues 493 to 532 (PHGPSKITSSGSLSSLLKIVESQAEHLQEQAMITLKNLSS), 534 to 571 (MEICLEMVSLDFIQKLTSFLQQKVFCKHSIIILKNLCS), and 573 to 613 (EKGR…QLCV). The interval 662 to 704 (KEEEEEVSSRPEGRTTASPTSQVVTPVTHPEPVKITPSPKKSG) is disordered. Residues 676-686 (TTASPTSQVVT) are compositionally biased toward polar residues.

It catalyses the reaction S-ubiquitinyl-[E2 ubiquitin-conjugating enzyme]-L-cysteine + [acceptor protein]-L-lysine = [E2 ubiquitin-conjugating enzyme]-L-cysteine + N(6)-ubiquitinyl-[acceptor protein]-L-lysine.. It functions in the pathway protein modification; protein ubiquitination. Functions as an E3 ubiquitin ligase. The protein is U-box domain-containing protein 5 (PUB5) of Arabidopsis thaliana (Mouse-ear cress).